A 187-amino-acid chain; its full sequence is Prepilin peptidase-dependent protein B (187 aa).

The propeptide at 1–7 (MPVKEQG) is leader sequence. Phe8 carries the N-methylphenylalanine modification. Residues 8-28 (FSLLEVLIAMAISSVLLLGAA) traverse the membrane as a helical segment.

The protein resides in the membrane. Its function is as follows. Not yet known. The sequence is that of Prepilin peptidase-dependent protein B (ppdB) from Escherichia coli (strain K12).